A 75-amino-acid chain; its full sequence is Conotoxin TsMEKL-011 (75 aa).

Positions 1–19 are cleaved as a signal peptide; it reads MEKLTILLLVAAVLMSTQA. Positions 20–45 are excised as a propeptide; sequence LIQRGGAKRRKVNFFSIREPGAEDWR. 3 disulfide bridges follow: C49-C63, C56-C67, and C62-C71.

This sequence belongs to the conotoxin O2 superfamily. As to expression, expressed by the venom duct.

The protein resides in the secreted. The chain is Conotoxin TsMEKL-011 from Conus tessulatus (Tessellate cone).